The following is an 808-amino-acid chain: Phenylalanine--tRNA ligase beta subunit (808 aa).

The region spanning 40 to 149 is the tRNA-binding domain; it reads RPELDFVKIV…DQAEVGKTIR (110 aa). In terms of domain architecture, B5 spans 407 to 484; it reads HKEVRIHTDI…RTKGYDTIQV (78 aa). The Mg(2+) site is built by Asp-462, Asp-468, Glu-471, and Glu-472. Residues 716 to 808 enclose the FDX-ACB domain; it reads SQFPEAEIDL…LAGKNGFVLR (93 aa).

The protein belongs to the phenylalanyl-tRNA synthetase beta subunit family. Type 1 subfamily. As to quaternary structure, tetramer of two alpha and two beta subunits. Mg(2+) serves as cofactor.

It is found in the cytoplasm. The enzyme catalyses tRNA(Phe) + L-phenylalanine + ATP = L-phenylalanyl-tRNA(Phe) + AMP + diphosphate + H(+). The chain is Phenylalanine--tRNA ligase beta subunit from Leptospira interrogans serogroup Icterohaemorrhagiae serovar copenhageni (strain Fiocruz L1-130).